The following is a 395-amino-acid chain: Protein phosphatase PP2A regulatory subunit A (395 aa).

8 HEAT repeats span residues 44 to 81 (DCLA…AVGP), 83 to 120 (STKT…ILSP), 122 to 159 (LAIQ…VLGK), 161 to 198 (ATIE…VIGI), 200 to 237 (LLSQ…QLGV), 239 to 276 (FFDD…EEFG), 279 to 316 (WAMQ…VLGS), and 318 to 355 (ITST…IVDE).

This sequence belongs to the phosphatase 2A regulatory subunit A family. As to quaternary structure, PP2A exists in several trimeric forms, all of which consist of a core composed of a catalytic subunit associated with a 65 kDa regulatory subunit (PR65) (subunit A). The core complex associates with a third, variable subunit (subunit B), which confers distinct properties to the holoenzyme.

The PR65 subunit of protein phosphatase 2A serves as a scaffolding molecule to coordinate the assembly of the catalytic subunit and a variable regulatory B subunit. In Pisum sativum (Garden pea), this protein is Protein phosphatase PP2A regulatory subunit A.